The chain runs to 1706 residues: Histone acetyltransferase HAC12 (1706 aa).

4 disordered regions span residues 1–33, 251–284, 397–456, and 524–543; these read MNVQ…MQNL, TNNN…NSHM, VSRV…LGKT, and QNSQ…SDSS. The segment covering 397–406 has biased composition (polar residues); that stretch reads VSRVNSSLSH. Residues 407 to 434 show a composition bias toward low complexity; sequence QQQFQQPPNRFQQQPNQIQQQQQQFLNQ. A TAZ-type 1 zinc finger spans residues 637–716; sequence HDPKFKNQQR…DPRCPVCVPV (80 aa). The tract at residues 791–909 is disordered; the sequence is TESCKSSIVS…PELTSKSRKP (119 aa). A compositionally biased stretch (polar residues) spans 794–805; sequence CKSSIVSTTEAD. 2 stretches are compositionally biased toward basic and acidic residues: residues 809 to 829 and 870 to 896; these read DAER…KVEI and PKQE…KEEL. The PHD-type zinc finger occupies 998 to 1075; it reads HYFCIPCYNE…EYTCPYCYVI (78 aa). In terms of domain architecture, CBP/p300-type HAT spans 1090 to 1526; that stretch reads VLGAKDLPRT…VLYHLHNPTA (437 aa). Residues 1213–1215, 1232–1233, and tryptophan 1288 contribute to the acetyl-CoA site; these read LDS and RT. ZZ-type zinc fingers lie at residues 1408–1471 and 1528–1581; these read HLQH…IADI and AFVT…SLAD. Residues cysteine 1413, cysteine 1416, cysteine 1428, cysteine 1431, cysteine 1437, cysteine 1440, histidine 1453, histidine 1461, cysteine 1533, cysteine 1536, cysteine 1548, cysteine 1551, cysteine 1557, cysteine 1560, histidine 1569, and histidine 1571 each coordinate Zn(2+). The segment at 1588–1671 adopts a TAZ-type 2 zinc-finger fold; sequence EARQLRVLQL…ECDVPRCGDL (84 aa).

The protein localises to the nucleus. The enzyme catalyses L-lysyl-[protein] + acetyl-CoA = N(6)-acetyl-L-lysyl-[protein] + CoA + H(+). In terms of biological role, acetyltransferase enzyme. Acetylates histones, giving a specific tag for transcriptional activation. This Arabidopsis thaliana (Mouse-ear cress) protein is Histone acetyltransferase HAC12 (HAC12).